A 267-amino-acid polypeptide reads, in one-letter code: MSFPYFISPEQAMRERSELARKGIARGKSVVALAFAGGVLFVAENPSRSLQKISELYDRVGFAAAGKFNEFDNLRRGGIQFADTRGYAYDRRDVTGRQLANVYAQTLGTIFTEQAKPYEVELCVAEVAHYGESKAPELYRITYDGSIADEPHFVVMGGTTEPITTALKNTYTENADLPDALGIAVEALRAGSAENSSNDQPVLGVASLEAAILDANKPRRAFRRLTRSTLETLLQERDSKESAESEEPKESEEGKKTGKKSDADSSD.

The interval 231-267 is disordered; the sequence is ETLLQERDSKESAESEEPKESEEGKKTGKKSDADSSD. Basic and acidic residues predominate over residues 234–267; that stretch reads LQERDSKESAESEEPKESEEGKKTGKKSDADSSD.

It belongs to the peptidase T1A family. As to quaternary structure, the 20S proteasome core is composed of 14 alpha and 14 beta subunits that assemble into four stacked heptameric rings, resulting in a barrel-shaped structure. The two inner rings, each composed of seven catalytic beta subunits, are sandwiched by two outer rings, each composed of seven alpha subunits. The catalytic chamber with the active sites is on the inside of the barrel. Has a gated structure, the ends of the cylinder being occluded by the N-termini of the alpha-subunits. Is capped by the proteasome-associated ATPase, ARC.

It localises to the cytoplasm. It participates in protein degradation; proteasomal Pup-dependent pathway. Its activity is regulated as follows. The formation of the proteasomal ATPase ARC-20S proteasome complex, likely via the docking of the C-termini of ARC into the intersubunit pockets in the alpha-rings, may trigger opening of the gate for substrate entry. Interconversion between the open-gate and close-gate conformations leads to a dynamic regulation of the 20S proteasome proteolysis activity. Component of the proteasome core, a large protease complex with broad specificity involved in protein degradation. This Mycobacterium marinum (strain ATCC BAA-535 / M) protein is Proteasome subunit alpha.